The chain runs to 738 residues: MQKKVVQSASKNEELDPHYKRSSVPFPYGLPDYDAEYQFINHHMQQLLTRPVEGTHSASVHPSTSSTSHISSPSAFSVQNPNPNDAPFVGNIGLDASGFSSGGMSEYYPRSVSMQQSQDVHFQNTEIPYYHRSPSSDSFSPGVVASVNPNSNNSPTFYSNPPALSNIPIPLNNSPYRPEDAYFQLQGAGVKADINPYNLSPYSQYGPEGTAYSNAQAHHQDGAPLQRVCSAPDPPKTSMPPFGSAGSPSPNRSLNVSNNTTPPLSTVNKIIKKPKATTGKVKKRLPQAKRACAKCQKDNKKCDDARPCQRCIKAKTDCIDLPRKKRPTGVRRGPYKKLSDTSNNTKSTTASSGHSTQDSLSSKMLDPSSDNQFAMSSRQMDENGMAQYPSSAIKQELNLQPQILVSSASKNFQPNVTPPFAVHHDHFNSTSMDGVAVSNMDETGTSSAGSKPFNRKSRNRSFTNPVGMTEEHFLREYAQHSVANPSLLIHQIHGLPSEQVHGLLSHTELGNAMHNQPTYNESSIAAENVNNWMLETNDHENLSMQSHFEVPDLKMNHHDSSFFDRHIDQTAMPGQNQHGTVKNMETMHHFYPDVHNSEFPAAPNPVKSQVPYYYQSQAADDEEEDVPDHQPSWRGRIHSFSIATDSSQHVVERPCIHSLRGIHGQQDGGLEQHDGDHVNMLPDTHAEELAYTSMLLFHDIPTRDIRPDFNVHELVDHGTYPNFHQNQADSFKNHPFRQ.

Polar residues predominate over residues 1–10 (MQKKVVQSAS). 3 disordered regions span residues 1-23 (MQKK…KRSS), 53-83 (EGTH…NPNP), and 219-266 (HQDG…PLST). Residues 55-77 (THSASVHPSTSSTSHISSPSAFS) are compositionally biased toward low complexity. A compositionally biased stretch (polar residues) spans 246–266 (GSPSPNRSLNVSNNTTPPLST). Phosphothreonine occurs at positions 260 and 261. The zn(2)-C6 fungal-type DNA-binding region spans 292-318 (CAKCQKDNKKCDDARPCQRCIKAKTDC). Positions 323 to 335 (RKKRPTGVRRGPY) are enriched in basic residues. 2 disordered regions span residues 323–372 (RKKR…SDNQ) and 441–464 (DETG…SFTN). Low complexity predominate over residues 340–352 (DTSNNTKSTTASS). The segment covering 353 to 372 (GHSTQDSLSSKMLDPSSDNQ) has biased composition (polar residues).

The protein localises to the cytoplasm. It is found in the nucleus. This is an uncharacterized protein from Schizosaccharomyces pombe (strain 972 / ATCC 24843) (Fission yeast).